A 414-amino-acid chain; its full sequence is 26S proteasome regulatory subunit 8 homolog (414 aa).

Residue 197–204 coordinates ATP; that stretch reads GPPGTGKT.

The protein belongs to the AAA ATPase family.

Its subcellular location is the cytoplasm. The protein localises to the nucleus. Functionally, the 26S proteasome is involved in the ATP-dependent degradation of ubiquitinated proteins. The regulatory (or ATPase) complex confers ATP dependency and substrate specificity to the 26S complex. This chain is 26S proteasome regulatory subunit 8 homolog, found in Naegleria fowleri (Brain eating amoeba).